Consider the following 1314-residue polypeptide: E3 ubiquitin-protein ligase RNF123 (1314 aa).

A2 carries the N-acetylalanine modification. A B30.2/SPRY domain is found at V74–L254. S675 carries the phosphoserine modification. R683 is subject to Asymmetric dimethylarginine. The segment at W968 to W974 is interaction with NFKB1. 8 residues coordinate Zn(2+): C1254, C1257, C1269, H1271, C1274, C1277, C1288, and C1291. An RING-type zinc finger spans residues C1254 to K1292.

Component of the KPC complex composed of RNF123/KPC1 and UBAC1/KPC2. Interacts with UBAC1 and CDKN1B via its N-terminal domain. Interacts with RIGI (via N-terminus) and IFIH1 (via N-terminus). Post-translationally, ubiquitinated, leading to its degradation. Deubiquitinated by USP19, thereby stimulating CDKN1B ubiquitin-dependent degradation.

It is found in the cytoplasm. The catalysed reaction is S-ubiquitinyl-[E2 ubiquitin-conjugating enzyme]-L-cysteine + [acceptor protein]-L-lysine = [E2 ubiquitin-conjugating enzyme]-L-cysteine + N(6)-ubiquitinyl-[acceptor protein]-L-lysine.. The protein operates within protein modification; protein ubiquitination. Its function is as follows. Catalytic subunit of the KPC complex that acts as E3 ubiquitin-protein ligase. Promotes the ubiquitination and proteasome-mediated degradation of CDKN1B which is the cyclin-dependent kinase inhibitor at the G0-G1 transition of the cell cycle. Also acts as a key regulator of the NF-kappa-B signaling by promoting maturation of the NFKB1 component of NF-kappa-B: acts by catalyzing ubiquitination of the NFKB1 p105 precursor, leading to limited proteasomal degradation of NFKB1 p105 and generation of the active NFKB1 p50 subunit. Also functions as an inhibitor of innate antiviral signaling mediated by RIGI and IFIH1 independently of its E3 ligase activity. Interacts with the N-terminal CARD domains of RIGI and IFIH1 and competes with the downstream adapter MAVS. The protein is E3 ubiquitin-protein ligase RNF123 of Homo sapiens (Human).